We begin with the raw amino-acid sequence, 686 residues long: Acyl-CoA synthetase short-chain family member 3, mitochondrial (686 aa).

Residues 1 to 29 (MKPSWLQCHKVTSAGGLGGPLPGSSPARG) constitute a mitochondrion transit peptide. Position 227–230 (227–230 (EPGR)) interacts with CoA. ATP-binding positions include 425–427 (GER) and 446–451 (DHWWQT). Lysine 518 carries the N6-succinyllysine modification. Lysine 524 bears the N6-acetyllysine mark. ATP contacts are provided by aspartate 539, arginine 554, and arginine 565. A CoA-binding site is contributed by arginine 624.

It belongs to the ATP-dependent AMP-binding enzyme family.

Its subcellular location is the mitochondrion matrix. The enzyme catalyses acetate + ATP + CoA = acetyl-CoA + AMP + diphosphate. It catalyses the reaction propanoate + ATP + CoA = propanoyl-CoA + AMP + diphosphate. The catalysed reaction is butanoate + ATP + CoA = butanoyl-CoA + AMP + diphosphate. Functionally, catalyzes the synthesis of acetyl-CoA from short-chain fatty acids. Propionate is the preferred substrate but can also utilize acetate and butyrate with a much lower affinity. In Pongo abelii (Sumatran orangutan), this protein is Acyl-CoA synthetase short-chain family member 3, mitochondrial (ACSS3).